Reading from the N-terminus, the 428-residue chain is Gamma-glutamyl phosphate reductase (428 aa).

This sequence belongs to the gamma-glutamyl phosphate reductase family.

Its subcellular location is the cytoplasm. The enzyme catalyses L-glutamate 5-semialdehyde + phosphate + NADP(+) = L-glutamyl 5-phosphate + NADPH + H(+). It participates in amino-acid biosynthesis; L-proline biosynthesis; L-glutamate 5-semialdehyde from L-glutamate: step 2/2. Catalyzes the NADPH-dependent reduction of L-glutamate 5-phosphate into L-glutamate 5-semialdehyde and phosphate. The product spontaneously undergoes cyclization to form 1-pyrroline-5-carboxylate. This is Gamma-glutamyl phosphate reductase from Chromohalobacter salexigens (strain ATCC BAA-138 / DSM 3043 / CIP 106854 / NCIMB 13768 / 1H11).